Consider the following 130-residue polypeptide: Encapsulin nanocompartment cargo protein EncC (130 aa).

Fe cation contacts are provided by glutamate 31, glutamate 61, and histidine 64. The short motif at 61–64 is the Di-iron-binding motif element; it reads EREH. Positions 103–130 are disordered; that stretch reads EAVGKEGAAPSPADVTPEKRLTVGSLRR. Residues 123 to 130 are probable targeting peptide; the sequence is LTVGSLRR.

Belongs to the ferritin-like superfamily.

It is found in the encapsulin nanocompartment. Its function is as follows. Cargo protein of a type 1 encapsulin nanocompartment. May help nucleate Fe atoms in the interior of the encapsulin nanocompartment. Present in about 92 copies/encapsulin nanocompartment. The chain is Encapsulin nanocompartment cargo protein EncC from Myxococcus xanthus (strain DK1622).